Consider the following 269-residue polypeptide: Myelin protein zero-like protein 1 (269 aa).

Residues 1-35 (MAAPAGAGALIASPDRRRCLWSVLAAALGLLTYGV) form the signal peptide. Residues 36-146 (SALEVYTPKE…VKNPPDIVVQ (111 aa)) enclose the Ig-like V-type domain. Topologically, residues 36 to 162 (SALEVYTPKE…YVVEKEILPA (127 aa)) are extracellular. 3 N-linked (GlcNAc...) asparagine glycosylation sites follow: Asn50, Asn64, and Asn130. Cys58 and Cys135 are oxidised to a cystine. A helical membrane pass occupies residues 163–183 (FPVWVVVGIVTAVVLGLTLLI). Residues 184–269 (TMILAVIYRR…SVVYADIRKN (86 aa)) lie on the Cytoplasmic side of the membrane. The segment at 202–238 (GCNTSENVSPVKQVSRKSPSDTEGLVKSLPSGSHQGP) is disordered. Polar residues predominate over residues 203 to 213 (CNTSENVSPVK). Phosphoserine is present on residues Ser206, Ser210, Ser219, and Ser221. An ITIM motif 1 motif is present at residues 239–244 (VIYAQL). Phosphotyrosine is present on Tyr241. Ser260 is subject to Phosphoserine. The ITIM motif 2 signature appears at 261–266 (VVYADI). Position 263 is a phosphotyrosine (Tyr263).

The protein belongs to the myelin P0 protein family. Interacts with phosphorylated PTPN11/SHP-2. In terms of processing, phosphorylated on tyrosine residues upon stimulation with pervanadate and concanavalin-A (ConA). Phosphorylation at Tyr-241 and Tyr-263 is required for interaction with PTPN11/SHP-2. Dephosphorylated by PTPN11/SHP-2 (in vitro). N-glycosylated.

It localises to the membrane. Its function is as follows. Cell surface receptor, which is involved in signal transduction processes. Recruits PTPN11/SHP-2 to the cell membrane and is a putative substrate of PTPN11/SHP-2. Is a major receptor for concanavalin-A (ConA) and is involved in cellular signaling induced by ConA, which probably includes Src family tyrosine-protein kinases. May be involved in regulation of integrin-mediated cell motility. The sequence is that of Myelin protein zero-like protein 1 (MPZL1) from Bos taurus (Bovine).